The chain runs to 189 residues: Ribosome maturation factor RimM (189 aa).

Positions 95 to 169 (DEDEFFQTDL…IIKVEPHAAG (75 aa)) constitute a PRC barrel domain. The tract at residues 168 to 189 (AGLIADEHDNPPHESGKKPKKP) is disordered. Residues 172-189 (ADEHDNPPHESGKKPKKP) show a composition bias toward basic and acidic residues.

Belongs to the RimM family. In terms of assembly, binds ribosomal protein uS19.

The protein localises to the cytoplasm. An accessory protein needed during the final step in the assembly of 30S ribosomal subunit, possibly for assembly of the head region. Essential for efficient processing of 16S rRNA. May be needed both before and after RbfA during the maturation of 16S rRNA. It has affinity for free ribosomal 30S subunits but not for 70S ribosomes. This is Ribosome maturation factor RimM from Brucella abortus (strain S19).